A 397-amino-acid polypeptide reads, in one-letter code: Exodeoxyribonuclease 7 large subunit (397 aa).

This sequence belongs to the XseA family. As to quaternary structure, heterooligomer composed of large and small subunits.

It localises to the cytoplasm. It catalyses the reaction Exonucleolytic cleavage in either 5'- to 3'- or 3'- to 5'-direction to yield nucleoside 5'-phosphates.. Its function is as follows. Bidirectionally degrades single-stranded DNA into large acid-insoluble oligonucleotides, which are then degraded further into small acid-soluble oligonucleotides. The sequence is that of Exodeoxyribonuclease 7 large subunit from Anaplasma marginale (strain St. Maries).